A 176-amino-acid polypeptide reads, in one-letter code: Bifunctional protein PyrR (176 aa).

The PRPP-binding motif lies at 93–105; sequence VILVDDVLYTGRT.

Belongs to the purine/pyrimidine phosphoribosyltransferase family. PyrR subfamily. In terms of assembly, homodimer and homohexamer; in equilibrium.

The catalysed reaction is UMP + diphosphate = 5-phospho-alpha-D-ribose 1-diphosphate + uracil. In terms of biological role, regulates transcriptional attenuation of the pyrimidine nucleotide (pyr) operon by binding in a uridine-dependent manner to specific sites on pyr mRNA. This disrupts an antiterminator hairpin in the RNA and favors formation of a downstream transcription terminator, leading to a reduced expression of downstream genes. Its function is as follows. Also displays a weak uracil phosphoribosyltransferase activity which is not physiologically significant. The polypeptide is Bifunctional protein PyrR (Streptococcus mutans serotype c (strain ATCC 700610 / UA159)).